We begin with the raw amino-acid sequence, 418 residues long: MKVLVLGAGVAGVSSAWYLAEAGHEVTVIDRAEGVAMETSFANAGQLSYGYTTPWAAPGIPTKALKWLFKSHPPLLFRPDGSLYQIEWLWQMLQNCTAAHYQTNKERMVRISEYSREMFRRFEAQTGMNFEERKKGTLQIFRQTKEVEAAEQDIAVLERYGVPYRRLKPEECAEFEPALARVTAKIASGLHLPADATGDCRLFTENLYKLCQEKGVRFHFNQTISRIDHNGLRIKTVETETGRFEADAVVCALGCFSRTVLAQLDLNLPIYPVKGYSLTLPVTNSDGAPVSTVLDESYKVAITRFDNRIRVGGMAELSGYEIKLPEKRRETLALVVNDLFPEGGDLSQASFWSGLRPMTPDSTPLIGRTRFDNLFLNTGHGTLGWTMSLGSAKLTADIVSGKDTEIRSDDLSLSRYQA.

3–17 (VLVLGAGVAGVSSAW) serves as a coordination point for FAD.

It belongs to the DadA oxidoreductase family. FAD serves as cofactor.

It catalyses the reaction a D-alpha-amino acid + A + H2O = a 2-oxocarboxylate + AH2 + NH4(+). Its pathway is amino-acid degradation; D-alanine degradation; NH(3) and pyruvate from D-alanine: step 1/1. In terms of biological role, oxidative deamination of D-amino acids. This chain is D-amino acid dehydrogenase, found in Neisseria meningitidis serogroup C (strain 053442).